Consider the following 318-residue polypeptide: Holliday junction branch migration complex subunit RuvB (318 aa).

Positions 1–168 are large ATPase domain (RuvB-L); sequence MPENLEIRPS…FGYVAKIVDY (168 aa). Ile-7, Arg-8, Gly-49, Lys-52, Thr-53, Thr-54, Arg-158, Tyr-168, and Arg-205 together coordinate ATP. Thr-53 is a binding site for Mg(2+). Residues 169-239 form a small ATPAse domain (RuvB-S) region; that stretch reads TLEDMIQIIR…IVNKTFDSIG (71 aa). The head domain (RuvB-H) stretch occupies residues 242–318; sequence NQGLSQINIE…RDYLLELKTN (77 aa). Residues Arg-278, Lys-297, and Arg-302 each contribute to the DNA site.

This sequence belongs to the RuvB family. As to quaternary structure, homohexamer. Forms an RuvA(8)-RuvB(12)-Holliday junction (HJ) complex. HJ DNA is sandwiched between 2 RuvA tetramers; dsDNA enters through RuvA and exits via RuvB. An RuvB hexamer assembles on each DNA strand where it exits the tetramer. Each RuvB hexamer is contacted by two RuvA subunits (via domain III) on 2 adjacent RuvB subunits; this complex drives branch migration. In the full resolvosome a probable DNA-RuvA(4)-RuvB(12)-RuvC(2) complex forms which resolves the HJ.

The protein resides in the cytoplasm. It catalyses the reaction ATP + H2O = ADP + phosphate + H(+). Its function is as follows. The RuvA-RuvB-RuvC complex processes Holliday junction (HJ) DNA during genetic recombination and DNA repair, while the RuvA-RuvB complex plays an important role in the rescue of blocked DNA replication forks via replication fork reversal (RFR). RuvA specifically binds to HJ cruciform DNA, conferring on it an open structure. The RuvB hexamer acts as an ATP-dependent pump, pulling dsDNA into and through the RuvAB complex. RuvB forms 2 homohexamers on either side of HJ DNA bound by 1 or 2 RuvA tetramers; 4 subunits per hexamer contact DNA at a time. Coordinated motions by a converter formed by DNA-disengaged RuvB subunits stimulates ATP hydrolysis and nucleotide exchange. Immobilization of the converter enables RuvB to convert the ATP-contained energy into a lever motion, pulling 2 nucleotides of DNA out of the RuvA tetramer per ATP hydrolyzed, thus driving DNA branch migration. The RuvB motors rotate together with the DNA substrate, which together with the progressing nucleotide cycle form the mechanistic basis for DNA recombination by continuous HJ branch migration. Branch migration allows RuvC to scan DNA until it finds its consensus sequence, where it cleaves and resolves cruciform DNA. The polypeptide is Holliday junction branch migration complex subunit RuvB (Mesomycoplasma hyopneumoniae (strain 232) (Mycoplasma hyopneumoniae)).